A 116-amino-acid chain; its full sequence is Large ribosomal subunit protein bL20c (116 aa).

The protein belongs to the bacterial ribosomal protein bL20 family.

It is found in the plastid. It localises to the chloroplast. Binds directly to 23S ribosomal RNA and is necessary for the in vitro assembly process of the 50S ribosomal subunit. It is not involved in the protein synthesizing functions of that subunit. The protein is Large ribosomal subunit protein bL20c of Cryptomeria japonica (Japanese cedar).